Consider the following 292-residue polypeptide: 2-(5''-triphosphoribosyl)-3'-dephosphocoenzyme-A synthase (292 aa).

It belongs to the CitG/MdcB family.

The catalysed reaction is 3'-dephospho-CoA + ATP = 2'-(5''-triphospho-alpha-D-ribosyl)-3'-dephospho-CoA + adenine. Functionally, catalyzes the formation of 2-(5''-triphosphoribosyl)-3'-dephosphocoenzyme-A, the precursor of the prosthetic group of the holo-acyl carrier protein (gamma chain) of citrate lyase, from ATP and dephospho-CoA. The polypeptide is 2-(5''-triphosphoribosyl)-3'-dephosphocoenzyme-A synthase (Escherichia coli O127:H6 (strain E2348/69 / EPEC)).